The following is a 311-amino-acid chain: Phosphoribosylaminoimidazole-succinocarboxamide synthase (311 aa).

It belongs to the SAICAR synthetase family.

It carries out the reaction 5-amino-1-(5-phospho-D-ribosyl)imidazole-4-carboxylate + L-aspartate + ATP = (2S)-2-[5-amino-1-(5-phospho-beta-D-ribosyl)imidazole-4-carboxamido]succinate + ADP + phosphate + 2 H(+). It participates in purine metabolism; IMP biosynthesis via de novo pathway; 5-amino-1-(5-phospho-D-ribosyl)imidazole-4-carboxamide from 5-amino-1-(5-phospho-D-ribosyl)imidazole-4-carboxylate: step 1/2. The protein is Phosphoribosylaminoimidazole-succinocarboxamide synthase of Azoarcus sp. (strain BH72).